We begin with the raw amino-acid sequence, 237 residues long: Uridylate kinase (237 aa).

13–16 (KLSG) contributes to the ATP binding site. A UMP-binding site is contributed by glycine 53. ATP is bound by residues glycine 54 and arginine 58. UMP is bound by residues aspartate 73 and 134–141 (AGLPYFST). Residues asparagine 162, tyrosine 168, and aspartate 171 each contribute to the ATP site.

The protein belongs to the UMP kinase family. In terms of assembly, homohexamer.

It is found in the cytoplasm. It carries out the reaction UMP + ATP = UDP + ADP. The protein operates within pyrimidine metabolism; CTP biosynthesis via de novo pathway; UDP from UMP (UMPK route): step 1/1. With respect to regulation, inhibited by UTP. Its function is as follows. Catalyzes the reversible phosphorylation of UMP to UDP. This is Uridylate kinase from Leifsonia xyli subsp. xyli (strain CTCB07).